A 205-amino-acid chain; its full sequence is MELPVNSFDKKEASTLTVADSAFGSEYKEGLVHQVVNAYLAGGRAGTKAQKTRREVSGGGAKPWRQKGTGRARAGSSRSPLWRSGGVAFAAKPRDFTQKVNRKMYRSAMASILSELIRREQLVVVDSLKLNEPKTRELKESLKKLNLGNVLIIIDGDDRNINLASRNMVGVSVCDALHVDPVSLVAAENIVVTVDAVKRLEERLS.

The interval 44–79 is disordered; sequence RAGTKAQKTRREVSGGGAKPWRQKGTGRARAGSSRS.

Belongs to the universal ribosomal protein uL4 family. In terms of assembly, part of the 50S ribosomal subunit.

In terms of biological role, one of the primary rRNA binding proteins, this protein initially binds near the 5'-end of the 23S rRNA. It is important during the early stages of 50S assembly. It makes multiple contacts with different domains of the 23S rRNA in the assembled 50S subunit and ribosome. Its function is as follows. Forms part of the polypeptide exit tunnel. The protein is Large ribosomal subunit protein uL4 of Coxiella burnetii (strain RSA 331 / Henzerling II).